A 320-amino-acid polypeptide reads, in one-letter code: Heterogeneous nuclear ribonucleoprotein A1-like 2 (320 aa).

The segment at 4–94 is globular A domain; that stretch reads SASPKEPEQL…EPKRAVSRED (91 aa). Phosphoserine occurs at positions 6 and 22. RRM domains lie at 14–97 and 105–184; these read RKLF…DSQR and KKIF…LPKQ. The interval 95 to 185 is globular B domain; that stretch reads SQRPGAHLTV…EVRKALPKQE (91 aa). Residues 181–216 are disordered; that stretch reads LPKQEMASASSSQRGRRGSGNFGGGRGDGFGGNDNF. An asymmetric dimethylarginine; alternate mark is found at R194, R206, R218, and R225. An omega-N-methylarginine; alternate mark is found at R194, R206, R218, and R225. Positions 198-216 are enriched in gly residues; the sequence is GSGNFGGGRGDGFGGNDNF. Residues 218-240 form an RNA-binding RGG-box region; it reads RGGNFSGRGGFGGSCGGGGYGGS. The interval 268–305 is nuclear targeting sequence; sequence NQSSNFGPMKGGNFGGRSSGPYGGGGQYFAKPQNQGGY. Positions 271–320 are disordered; that stretch reads SNFGPMKGGNFGGRSSGPYGGGGQYFAKPQNQGGYGVSSSSSSYGSGRRF. The span at 276–294 shows a compositional bias: gly residues; sequence MKGGNFGGRSSGPYGGGGQ. An Omega-N-methylarginine modification is found at R284. The residue at position 298 (K298) is an N6-acetyllysine. Residues 307–320 show a composition bias toward low complexity; sequence VSSSSSSYGSGRRF.

It localises to the nucleus. The protein localises to the cytoplasm. In terms of biological role, involved in the packaging of pre-mRNA into hnRNP particles, transport of poly(A) mRNA from the nucleus to the cytoplasm and may modulate splice site selection. The polypeptide is Heterogeneous nuclear ribonucleoprotein A1-like 2 (HNRNPA1L2) (Homo sapiens (Human)).